Here is a 585-residue protein sequence, read N- to C-terminus: Frizzled-10 (585 aa).

The first 24 residues, 1-24 (MGPAAGNLVRAVLALCWLAEHCAG), serve as a signal peptide directing secretion. Over 25–229 (ISSIDIERPG…DVYWSKDDKQ (205 aa)) the chain is Extracellular. In terms of domain architecture, FZ spans 33-154 (PGDGRCQPIE…NDPNYLCMEA (122 aa)). 5 cysteine pairs are disulfide-bonded: cysteine 38–cysteine 99, cysteine 46–cysteine 92, cysteine 83–cysteine 121, cysteine 110–cysteine 151, and cysteine 114–cysteine 138. N-linked (GlcNAc...) asparagine glycosylation occurs at asparagine 52. Residues 155–195 (PNNGSDEPPRGSSMLPPMFRPQRPSTGHDLQQHKDSLSRTS) form a disordered region. N-linked (GlcNAc...) asparagine glycosylation is present at asparagine 157. A helical membrane pass occupies residues 230 to 250 (FAVIWIAIWSILCFFSSAFTV). Residues 251–265 (LTFLIDPQRFKYPER) are Cytoplasmic-facing. A helical transmembrane segment spans residues 266–286 (PIIFLSMCYCVYSVGYIIRLF). Over 287–314 (SGAESIACDRDSGQLYVIQEGLESTGCT) the chain is Extracellular. The helical transmembrane segment at 315–335 (IVFLVLYYFGMASSLWWVILT) threads the bilayer. Over 336–355 (LTWFLAAGKKWGHEAIEANS) the chain is Cytoplasmic. A helical transmembrane segment spans residues 356-376 (SYFHLAAWAIPAVKTIMILVM). The Extracellular segment spans residues 377–397 (RRVAGDELTGLCYVGSMDVNA). A helical membrane pass occupies residues 398–418 (LTGFVLIPLACYLIIGTSFIL). Residues 419–447 (SGFVALFHIRRVMKTGGENTDKLEKLMVR) lie on the Cytoplasmic side of the membrane. The helical transmembrane segment at 448–468 (IGVFSVLYTVPATCVIACYFY) threads the bilayer. The Extracellular portion of the chain corresponds to 469-506 (ERLNMDYWKIVASQQKCKMNNQTKNLDCMMNNSIPAVE). Asparagine 489 and asparagine 499 each carry an N-linked (GlcNAc...) asparagine glycan. The chain crosses the membrane as a helical span at residues 507 to 527 (IFMVKIFMLLVVGITSGMWIW). Residues 528 to 585 (TSKTLQSWQNVCSRRLKKRSRRKPASVITSSGIYKKPQHPQKTHLAKYESTLQPPTCV) are Cytoplasmic-facing. The short motif at 530–535 (KTLQSW) is the Lys-Thr-X-X-X-Trp motif, mediates interaction with the PDZ domain of Dvl family members element. A PDZ-binding motif is present at residues 583-585 (TCV).

The protein belongs to the G-protein coupled receptor Fz/Smo family. In terms of assembly, interacts with WNT7A. As to expression, expressed in the dorsal ectoderm overlying the developing spinal cord.

It is found in the cell membrane. Receptor for Wnt proteins. Functions in the canonical Wnt/beta-catenin signaling pathway. Activation by WNT7A induces expression of beta-catenin target genes. The canonical Wnt/beta-catenin signaling pathway leads to the activation of disheveled proteins, inhibition of GSK-3 kinase, nuclear accumulation of beta-catenin and activation of Wnt target genes. A second signaling pathway involving PKC and calcium fluxes has been seen for some family members, but it is not yet clear if it represents a distinct pathway or if it can be integrated in the canonical pathway, as PKC seems to be required for Wnt-mediated inactivation of GSK-3 kinase. Both pathways seem to involve interactions with G-proteins. May be involved in transduction and intercellular transmission of polarity information during tissue morphogenesis and/or in differentiated tissues. This chain is Frizzled-10 (FZD10), found in Gallus gallus (Chicken).